Reading from the N-terminus, the 419-residue chain is 3-isopropylmalate dehydratase large subunit (419 aa).

Residues Cys300, Cys360, and Cys363 each contribute to the [4Fe-4S] cluster site.

This sequence belongs to the aconitase/IPM isomerase family. LeuC type 2 subfamily. In terms of assembly, heterodimer of LeuC and LeuD. The cofactor is [4Fe-4S] cluster.

It carries out the reaction (2R,3S)-3-isopropylmalate = (2S)-2-isopropylmalate. Its pathway is amino-acid biosynthesis; L-leucine biosynthesis; L-leucine from 3-methyl-2-oxobutanoate: step 2/4. Functionally, catalyzes the isomerization between 2-isopropylmalate and 3-isopropylmalate, via the formation of 2-isopropylmaleate. The sequence is that of 3-isopropylmalate dehydratase large subunit from Clostridium beijerinckii (strain ATCC 51743 / NCIMB 8052) (Clostridium acetobutylicum).